Here is a 354-residue protein sequence, read N- to C-terminus: RH-like protein (354 aa).

The next 8 membrane-spanning stretches (helical) occupy residues 11-31 (GCLP…FFFF), 45-65 (VATY…LGFL), 77-97 (VAFN…LDGF), 125-145 (ISVG…MVLV), 167-187 (VNIM…AWCL), 209-229 (AMLG…ALLT), 238-258 (VFNT…VSSL), and 287-307 (LISS…ISIG).

Belongs to the ammonium transporter (TC 2.A.49) family. Rh subfamily.

The protein localises to the membrane. In terms of biological role, may be part of an oligomeric complex which is likely to have a transport or channel function in the erythrocyte membrane. The chain is RH-like protein from Hylobates pileatus (Pileated gibbon).